The primary structure comprises 72 residues: Guanine nucleotide-binding protein subunit gamma (72 aa).

The disordered stretch occupies residues 32-72 (MVSVAPPKANPSVSSKTKQQQHFKPGKATKDKATTKCCTIS). The S-palmitoyl cysteine moiety is linked to residue Cys68. Cys69 is subject to Cysteine methyl ester. The S-farnesyl cysteine moiety is linked to residue Cys69. Positions 70 to 72 (TIS) are cleaved as a propeptide — removed in mature form.

Belongs to the G protein gamma family. G proteins are composed of 3 units, alpha, beta and gamma. Binding of the beta-gamma subunit complex (git5-git11) to the alpha subunit (gpa2) facilitates interaction with GPCR git3.

It is found in the cell membrane. Gamma subunit of the heterotrimeric guanine nucleotide-binding protein (G protein) involved in glucose-induced cAMP signaling. The beta-gamma subunits (git5-git11) promote binding of the alpha subunit gpa2 to GPCR git3, which senses extracellular glucose, to activate cAMP-PKA signaling and repress sexual development and gluconeogenesis. This Schizosaccharomyces pombe (strain 972 / ATCC 24843) (Fission yeast) protein is Guanine nucleotide-binding protein subunit gamma (git11).